Reading from the N-terminus, the 123-residue chain is uncharacterized protein (123 aa).

In terms of domain architecture, Rhodanese spans 17 to 117 (SNDNAFLVDV…NNQDKGWKQN (101 aa)).

This is an uncharacterized protein from Rickettsia rickettsii.